A 324-amino-acid chain; its full sequence is Endochitinase 1 (324 aa).

The signal sequence occupies residues 1–22; the sequence is MSFLQALSIFLLLLLYVVVGSA. Residues 23-64 enclose the Chitin-binding type-1 domain; the sequence is EQCGRQAGGALCPGGLCCSQFGWCGSTADYCTVPGCQSQCSG. Cystine bridges form between Cys-25/Cys-40, Cys-34/Cys-46, Cys-39/Cys-53, Cys-58/Cys-62, Cys-95/Cys-158, Cys-170/Cys-178, and Cys-277/Cys-309. The active-site Proton donor is the Glu-139. The propeptide at 318-324 is removed in mature form; sequence GVSVDSM.

The protein belongs to the glycosyl hydrolase 19 family. Chitinase class I subfamily.

The catalysed reaction is Random endo-hydrolysis of N-acetyl-beta-D-glucosaminide (1-&gt;4)-beta-linkages in chitin and chitodextrins.. Defense against chitin-containing fungal pathogens. This chain is Endochitinase 1, found in Gossypium hirsutum (Upland cotton).